The chain runs to 113 residues: Large ribosomal subunit protein bL19 (113 aa).

The protein belongs to the bacterial ribosomal protein bL19 family.

Its function is as follows. This protein is located at the 30S-50S ribosomal subunit interface and may play a role in the structure and function of the aminoacyl-tRNA binding site. In Rhodococcus erythropolis (strain PR4 / NBRC 100887), this protein is Large ribosomal subunit protein bL19.